A 424-amino-acid chain; its full sequence is Probable aminotransferase TAT4 (424 aa).

This sequence belongs to the class-I pyridoxal-phosphate-dependent aminotransferase family. Requires pyridoxal 5'-phosphate as cofactor.

This chain is Probable aminotransferase TAT4, found in Arabidopsis thaliana (Mouse-ear cress).